The primary structure comprises 388 residues: Large ribosomal subunit protein uL3B (388 aa).

The segment covering 1-10 has biased composition (basic and acidic residues); that stretch reads MSHCKFEQPR. The tract at residues 1–34 is disordered; sequence MSHCKFEQPRHGSLGFLPRKRASRQRGKVKAFPK. Positions 18–31 are enriched in basic residues; sequence PRKRASRQRGKVKA.

This sequence belongs to the universal ribosomal protein uL3 family. As to quaternary structure, component of the large ribosomal subunit (LSU). Mature yeast ribosomes consist of a small (40S) and a large (60S) subunit. The 40S small subunit contains 1 molecule of ribosomal RNA (18S rRNA) and at least 33 different proteins. The large 60S subunit contains 3 rRNA molecules (25S, 5.8S and 5S rRNA) and at least 46 different proteins. uL3 forms together with ES39L one of the contact sites for the signal recognition particle that targets ribosomes to the endoplasmic reticulum membrane.

The protein resides in the cytoplasm. Component of the ribosome, a large ribonucleoprotein complex responsible for the synthesis of proteins in the cell. The small ribosomal subunit (SSU) binds messenger RNAs (mRNAs) and translates the encoded message by selecting cognate aminoacyl-transfer RNA (tRNA) molecules. The large subunit (LSU) contains the ribosomal catalytic site termed the peptidyl transferase center (PTC), which catalyzes the formation of peptide bonds, thereby polymerizing the amino acids delivered by tRNAs into a polypeptide chain. The nascent polypeptides leave the ribosome through a tunnel in the LSU and interact with protein factors that function in enzymatic processing, targeting, and the membrane insertion of nascent chains at the exit of the ribosomal tunnel. uL3 plays a role in coordinating processes of accommodating the aminoacyl-tRNA in the PTC. The protein is Large ribosomal subunit protein uL3B (rpl302) of Schizosaccharomyces pombe (strain 972 / ATCC 24843) (Fission yeast).